Here is a 576-residue protein sequence, read N- to C-terminus: Small ribosomal subunit protein mS80 (rPPR6) (576 aa).

Residues 1-76 constitute a mitochondrion transit peptide; it reads MLRSFLCRSQ…SLPADEIPIS (76 aa). 9 PPR repeats span residues 230–264, 265–299, 300–336, 341–370, 371–405, 406–440, 441–475, 476–510, and 511–546; these read NLEI…GFTP, NAKT…GVLS, EGEQ…SLPP, TLIT…ARRR, GIKP…GPAP, GNAV…GLKP, DVYT…HKKL, SPVT…GVQP, and NADE…GLHL.

Belongs to the PPR family. P subfamily. As to quaternary structure, component of the mitochondrial ribosome small subunit.

It is found in the mitochondrion. This chain is Small ribosomal subunit protein mS80 (rPPR6), found in Arabidopsis thaliana (Mouse-ear cress).